The following is a 147-amino-acid chain: Elongation factor Tu (147 aa).

The protein belongs to the GTP-binding elongation factor family. EF-Tu/EF-1A subfamily. As to quaternary structure, monomer.

The protein resides in the cytoplasm. This protein promotes the GTP-dependent binding of aminoacyl-tRNA to the A-site of ribosomes during protein biosynthesis. This Fructilactobacillus sanfranciscensis (Lactobacillus sanfranciscensis) protein is Elongation factor Tu (tuf).